The chain runs to 156 residues: Transcription elongation factor GreA (156 aa).

Residues 46–67 (AEYHAAREKQSFIEGRIKELEA) are a coiled coil.

The protein belongs to the GreA/GreB family.

Necessary for efficient RNA polymerase transcription elongation past template-encoded arresting sites. The arresting sites in DNA have the property of trapping a certain fraction of elongating RNA polymerases that pass through, resulting in locked ternary complexes. Cleavage of the nascent transcript by cleavage factors such as GreA or GreB allows the resumption of elongation from the new 3'terminus. GreA releases sequences of 2 to 3 nucleotides. In Cereibacter sphaeroides (strain ATCC 17029 / ATH 2.4.9) (Rhodobacter sphaeroides), this protein is Transcription elongation factor GreA.